Reading from the N-terminus, the 110-residue chain is UPF0367 protein sync_2587 (110 aa).

It belongs to the UPF0367 family.

The chain is UPF0367 protein sync_2587 from Synechococcus sp. (strain CC9311).